Reading from the N-terminus, the 294-residue chain is Cytidine deaminase (294 aa).

CMP/dCMP-type deaminase domains are found at residues N48–K168 and D187–L294. N89–E91 lines the substrate pocket. Position 102 (H102) interacts with Zn(2+). E104 functions as the Proton donor in the catalytic mechanism. Residues C129 and C132 each coordinate Zn(2+).

The protein belongs to the cytidine and deoxycytidylate deaminase family. Homodimer. The cofactor is Zn(2+).

It carries out the reaction cytidine + H2O + H(+) = uridine + NH4(+). It catalyses the reaction 2'-deoxycytidine + H2O + H(+) = 2'-deoxyuridine + NH4(+). In terms of biological role, this enzyme scavenges exogenous and endogenous cytidine and 2'-deoxycytidine for UMP synthesis. The polypeptide is Cytidine deaminase (Proteus mirabilis (strain HI4320)).